Consider the following 65-residue polypeptide: Large ribosomal subunit protein bL35 (65 aa).

Over residues M1–R16 the composition is skewed to basic residues. Residues M1 to G20 form a disordered region.

Belongs to the bacterial ribosomal protein bL35 family.

This Streptococcus pyogenes serotype M1 protein is Large ribosomal subunit protein bL35.